The following is a 159-amino-acid chain: Single-stranded DNA-binding protein 2 (159 aa).

In terms of domain architecture, SSB spans 2–104; it reads MNRVVLVGRL…VVAESVQFLE (103 aa). The disordered stretch occupies residues 106–159; sequence RNHAEGATSNNYQNEANYSNNNKTSSYRADTSQKSDSFANEGKPIDINPDDLPF. The span at 114-127 shows a compositional bias: low complexity; the sequence is SNNYQNEANYSNNN. Polar residues predominate over residues 128 to 143; the sequence is KTSSYRADTSQKSDSF.

Homotetramer.

The protein is Single-stranded DNA-binding protein 2 (ssb2) of Listeria innocua serovar 6a (strain ATCC BAA-680 / CLIP 11262).